The sequence spans 174 residues: MLPRITITIMSWMLLSCLMLLSQVQGEVAKKDAPSSRSSCPKGSRAYGSYCYALFSVSKNWYDADMACQKRPSGHLVSVLSGAEASFLSSMIKSSGNSGQYVWIGLHDPTLGYEPNRGGWEWSNADVMNYINWETNPSSSSGNHCGTLSRASGFLKWRENYCNLELPYVCKFKA.

The signal sequence occupies residues 1–26 (MLPRITITIMSWMLLSCLMLLSQVQG). Positions 27–37 (EVAKKDAPSSR) are excised as a propeptide. Disulfide bonds link Cys40–Cys51, Cys68–Cys170, and Cys145–Cys162. The region spanning 47 to 171 (YGSYCYALFS…CNLELPYVCK (125 aa)) is the C-type lectin domain. The interval 103 to 118 (WIGLHDPTLGYEPNRG) is sufficient to activate EXTL3. His107 is a binding site for Zn(2+). The EPN signature appears at 114–116 (EPN). Residues Glu121 and His144 each coordinate Zn(2+).

In terms of assembly, forms a hexameric membrane-permeabilizing oligomeric pore on membrane phospholipids. The hexamer is formed by three dimers related by helical symmetry. Forms filaments, filamentation traps pore complexes and limits damage to host cells. Interacts with EXTL3. In terms of processing, proteolytic processing by trypsin removes an inhibitory N-terminal propeptide and is essential for peptidoglycan binding and antibacterial activity. In terms of tissue distribution, predominantly expressed in the small intestine, including Paneth cells (at protein level). Hardly detectable in the colon (at protein level). Highly expressed in the lung epithelium during methicillin-resistant S.aureus infection and allergic airway inflammation (at protein level). Skin injury increases its epidermal expression. Also expressed in the pancreas. Expressed by nocireceptors.

The protein localises to the secreted. Its subcellular location is the cytoplasm. With respect to regulation, lipopolysaccharide inhibits pore-forming activity, explaining why is bactericidal for Gram-positive but not Gram-negative bacteria. Functionally, bactericidal C-type lectin which acts exclusively against Gram-positive bacteria and mediates bacterial killing by binding to surface-exposed carbohydrate moieties of peptidoglycan. Restricts bacterial colonization of the intestinal epithelial surface and consequently limits activation of adaptive immune responses by the microbiota. Acts as a hormone in response to different stimuli like anti-inflammatory signals, such as IL17A, or gut microbiome. Is secreted by different cell types to activate its receptor EXTL3 and induce cell specific signaling pathways. Induced by IL17A in keratinocytes, regulates keratinocyte proliferation and differentiation after skin injury. In parallel, inhibits skin inflammation through the inhibition of inflammatory cytokines such as IL6 and TNF. Induced by IL22 in lung epithelial cells, inhibits cytokine production and regulates allergic airway inflammation. Induced in small intestine by inulin-enriched diet and Lactobacillus gasseri enriched microbiome, plays a role in the improvement of gut barrier function, the regulation of energy balance and glucose levels. Modulates microbiota composition in duodenal contents. Produced by nociceptor in response to endotoxins, prevents endotoxic death by targeting kynurenine pathway in microglia. In terms of biological role, has bacteriostatic activity. Its function is as follows. Has bactericidal activity against L.monocytogenes and methicillin-resistant S.aureus. The protein is Regenerating islet-derived protein 3-gamma of Mus musculus (Mouse).